Reading from the N-terminus, the 119-residue chain is MIHGIGIDLIEIDRIKKAFEKQKDKLVKRILTQEEEQQFHSFKSEKRKLEFLSGRFATKEAFSKALGTGLGKTVAFKDINCYNDIKGKPCIDYNGFIVHVSITHTEHYAMSQVLLEKRD.

Positions 8 and 60 each coordinate Mg(2+).

It belongs to the P-Pant transferase superfamily. AcpS family. It depends on Mg(2+) as a cofactor.

It localises to the cytoplasm. The enzyme catalyses apo-[ACP] + CoA = holo-[ACP] + adenosine 3',5'-bisphosphate + H(+). Transfers the 4'-phosphopantetheine moiety from coenzyme A to a Ser of acyl-carrier-protein. This Staphylococcus haemolyticus (strain JCSC1435) protein is Holo-[acyl-carrier-protein] synthase.